The sequence spans 382 residues: Alkanesulfonate monooxygenase (382 aa).

It belongs to the SsuD family.

The catalysed reaction is an alkanesulfonate + FMNH2 + O2 = an aldehyde + FMN + sulfite + H2O + 2 H(+). Catalyzes the desulfonation of aliphatic sulfonates. The polypeptide is Alkanesulfonate monooxygenase (Pseudomonas putida (strain ATCC 700007 / DSM 6899 / JCM 31910 / BCRC 17059 / LMG 24140 / F1)).